A 256-amino-acid polypeptide reads, in one-letter code: uncharacterized protein (256 aa).

Positions 211–256 (RKLQASVTTTPPKRCKLADRPAQTTQDTPRAPQPAPVRAQRPLFTL) are disordered. Positions 246–256 (PVRAQRPLFTL) are enriched in low complexity.

This is an uncharacterized protein from Orgyia pseudotsugata (Douglas-fir tussock moth).